The chain runs to 435 residues: MDSFEHLRPEDSQSVVSRMQKKYWKTKQVFIKATGKKEDEHVVASDAELDAKLEVFHSIQETCNELVKAVEKYQLRLNVISEEENELGLFLTFQAERDATQAGKMMGAAGKALCSSAKQRLALCTPLSRLKQEVATFSQRAISDTSVTINRMERARTEYRGALLWMKDASQELDPDTFKQVEKFRKVQIQVRNSKDCFDKLKMDVCQKVDLLGASRCNMLSHSLATYQRTLLGFWEKTAQMMSQIQEACAGFHPYDFMALKQLQDTPGNLTAEDKEEQTEGSCLSTNLNKVALSEEEERFEREPAVARALPRDSLEGDDFEKEFSFLSSLLSPTSSRASECTQECQPACGSPSLMCQEPSLGPGPLTSSSQFLPSRLFDLGLHADGAFNSWASQEGSEHSDTLPVPSQHPKKLKYLGPLSNPDAIGHSDDELLNA.

Residues 44–247 (ASDAELDAKL…TAQMMSQIQE (204 aa)) form the AH domain. Residues 391–435 (WASQEGSEHSDTLPVPSQHPKKLKYLGPLSNPDAIGHSDDELLNA) are disordered. Positions 426–435 (GHSDDELLNA) are enriched in basic and acidic residues.

This Rattus norvegicus (Rat) protein is Islet cell autoantigen 1-like protein (Ica1l).